Here is a 391-residue protein sequence, read N- to C-terminus: Phosphoglycerate kinase (391 aa).

Residues 21 to 23 (DLN), Arg36, 59 to 62 (HLGR), Arg113, and Arg146 each bind substrate. ATP contacts are provided by residues Lys197, Glu319, and 345 to 348 (GGDT).

Belongs to the phosphoglycerate kinase family. In terms of assembly, monomer.

The protein resides in the cytoplasm. The catalysed reaction is (2R)-3-phosphoglycerate + ATP = (2R)-3-phospho-glyceroyl phosphate + ADP. The protein operates within carbohydrate degradation; glycolysis; pyruvate from D-glyceraldehyde 3-phosphate: step 2/5. In Shewanella sp. (strain MR-4), this protein is Phosphoglycerate kinase.